A 520-amino-acid polypeptide reads, in one-letter code: mRNA-capping enzyme subunit beta (520 aa).

A disordered region spans residues 1 to 185 (MNVGSILNDD…PQPVFDDQDD (185 aa)). Polar residues-rich tracts occupy residues 11–21 (PPSSGNANGND) and 44–56 (ITSM…SDST). Positions 92 to 108 (SSSSVGSSEHSSARSSP) are enriched in low complexity. Basic and acidic residues-rich tracts occupy residues 126–135 (PATKTEKKAE) and 149–176 (KLEE…KKEP).

Belongs to the fungal TPase family. As to quaternary structure, heterodimer. The mRNA-capping enzyme is composed of two separate chains alpha and beta, respectively a mRNA guanylyltransferase and an mRNA 5'-triphosphate monophosphatase. Mg(2+) serves as cofactor.

The protein localises to the nucleus. The catalysed reaction is a 5'-end triphospho-ribonucleoside in mRNA + H2O = a 5'-end diphospho-ribonucleoside in mRNA + phosphate + H(+). In terms of biological role, first step of mRNA capping. Converts the 5'-triphosphate end of a nascent mRNA chain into a diphosphate end. In Candida albicans (strain SC5314 / ATCC MYA-2876) (Yeast), this protein is mRNA-capping enzyme subunit beta (CET1).